Here is a 453-residue protein sequence, read N- to C-terminus: Midnolin-A (453 aa).

One can recognise a Ubiquitin-like domain in the interval 20–94 (MNLNIQSTTG…LTLLPSVEAG (75 aa)). Disordered stretches follow at residues 184 to 219 (SHLA…TTSV), 232 to 256 (CAEQ…RSRK), 333 to 376 (RNAK…ENRA), and 390 to 429 (QKRL…EGSL). A compositionally biased stretch (polar residues) spans 206 to 219 (HCNGPHSSPLTTSV). Composition is skewed to low complexity over residues 239-252 (STRG…SPSS) and 338-351 (TSPQ…TTHP). The segment covering 365–376 (SGDRLRQTENRA) has biased composition (basic and acidic residues). The segment covering 390–399 (QKRLRRKARR) has biased composition (basic residues). The segment covering 415–428 (RTSSNSSTSSGEGS) has biased composition (low complexity).

It is found in the nucleus. The protein localises to the cytoplasm. Its subcellular location is the cytosol. It localises to the nucleolus. Functionally, facilitates ubiquitin-independent proteasomal degradation of polycomb protein CBX4. Plays a role in inhibiting the activity of glucokinase GCK and both glucose-induced and basal insulin secretion. This chain is Midnolin-A (midn-a), found in Xenopus laevis (African clawed frog).